Consider the following 201-residue polypeptide: Small ribosomal subunit protein uS4B (201 aa).

Positions 93–156 (QRLDTVVYRL…RSLAVVRESL (64 aa)) constitute an S4 RNA-binding domain.

It belongs to the universal ribosomal protein uS4 family. Part of the 30S ribosomal subunit. Contacts protein S5. The interaction surface between S4 and S5 is involved in control of translational fidelity.

Its function is as follows. One of the primary rRNA binding proteins, it binds directly to 16S rRNA where it nucleates assembly of the body of the 30S subunit. With S5 and S12 plays an important role in translational accuracy. The polypeptide is Small ribosomal subunit protein uS4B (Symbiobacterium thermophilum (strain DSM 24528 / JCM 14929 / IAM 14863 / T)).